Here is a 215-residue protein sequence, read N- to C-terminus: C' protein (215 aa).

The tract at residues 12-34 (MPSFLKKILKLRGRRQEDESRSR) is disordered. An involved in self-degradation and in host STAT1 degradation region spans residues 15-22 (FLKKILKL).

It belongs to the respirovirus protein C family. The different isoforms interact (via C-terminus) with unphosphorylated and phosphorylated human STAT1 (via N-terminus), favoring the formation of parallel STAT1 homodimers. The different isoforms do not interact with host STAT2. C protein interacts with L protein; this interaction has an inhibitory effect on viral transcription and replication. In terms of processing, Y1 and Y2 proteins are produced not only by alternative initiation, but also by proteolytic cleavage of C'. Only alternative initiation is detected in vitro, whereas in vivo cleavage seems to be predominant.

The protein localises to the host cytoplasm. Its subcellular location is the virion. In terms of biological role, the different isoforms prevent the establishment of cellular antiviral state by blocking the interferon-alpha/beta (IFN-alpha/beta) and IFN-gamma signaling pathways. They inhibit IFN-alpha/beta induced tyrosine phosphorylation of STAT1 and STAT2. Blocking the IFN-alpha/beta pathway requires binding to STAT1 in the cytoplasm. They inhibit IFN-gamma induced serine phosphorylation of STAT1. Block the IFN-gamma pathway by binding to and stabilizing the parallel form of the STAT1 dimer, further inducing high-molecular-weight complex (HMWC) formation and inhibition of transcription by IFN-gamma. May also have a role in preventing the cell to enter apoptosis. Modulate regulation of viral transcription and replication. Overexpression inhibits the viral RNA polymerase. The absence of all C', C, Y1 and Y2 proteins leads to viral delayed growth. Plays an important role in virion particles release. Modulates virion shape. The chain is C' protein (P/V/C) from Sendai virus (strain Z) (SeV).